A 616-amino-acid chain; its full sequence is Chaperone protein HscA (616 aa).

The protein belongs to the heat shock protein 70 family.

Functionally, chaperone involved in the maturation of iron-sulfur cluster-containing proteins. Has a low intrinsic ATPase activity which is markedly stimulated by HscB. Involved in the maturation of IscU. The protein is Chaperone protein HscA of Klebsiella pneumoniae subsp. pneumoniae (strain ATCC 700721 / MGH 78578).